A 208-amino-acid chain; its full sequence is Imidazoleglycerol-phosphate dehydratase (208 aa).

It belongs to the imidazoleglycerol-phosphate dehydratase family.

The protein localises to the cytoplasm. It carries out the reaction D-erythro-1-(imidazol-4-yl)glycerol 3-phosphate = 3-(imidazol-4-yl)-2-oxopropyl phosphate + H2O. The protein operates within amino-acid biosynthesis; L-histidine biosynthesis; L-histidine from 5-phospho-alpha-D-ribose 1-diphosphate: step 6/9. This is Imidazoleglycerol-phosphate dehydratase from Hyphomonas neptunium (strain ATCC 15444).